A 211-amino-acid polypeptide reads, in one-letter code: Large ribosomal subunit protein uL3 (211 aa).

It belongs to the universal ribosomal protein uL3 family. In terms of assembly, part of the 50S ribosomal subunit. Forms a cluster with proteins L14 and L19.

One of the primary rRNA binding proteins, it binds directly near the 3'-end of the 23S rRNA, where it nucleates assembly of the 50S subunit. The sequence is that of Large ribosomal subunit protein uL3 from Akkermansia muciniphila (strain ATCC BAA-835 / DSM 22959 / JCM 33894 / BCRC 81048 / CCUG 64013 / CIP 107961 / Muc).